The following is a 2506-amino-acid chain: Highly reducing polyketide synthase rstn3 (2506 aa).

Residues Val-8–Ala-436 enclose the Ketosynthase family 3 (KS3) domain. Residues Cys-183, His-318, and His-358 each act as for beta-ketoacyl synthase activity in the active site. Residues Phe-547–Gly-875 enclose the Malonyl-CoA:ACP transacylase (MAT) domain. The N-terminal hotdog fold stretch occupies residues His-941–Glu-1050. A PKS/mFAS DH domain is found at His-941–Glu-1212. Catalysis depends on His-973, which acts as the Proton acceptor; for dehydratase activity. Positions Asn-1060 to Glu-1212 are C-terminal hotdog fold. Asp-1125 serves as the catalytic Proton donor; for dehydratase activity. The segment at Val-1263–Tyr-1563 is methyltransferase (CMet) domain. The Enoyl reductase (ER) domain occupies Gly-1827–Leu-2093. The Ketoreductase (KR) domain maps to Ala-2116–Ile-2296. The 79-residue stretch at Ala-2423–Ala-2501 folds into the Carrier domain. Position 2460 is an O-(pantetheine 4'-phosphoryl)serine (Ser-2460).

It depends on pantetheine 4'-phosphate as a cofactor.

It participates in antifungal biosynthesis. In terms of biological role, highly reducing polyketide synthase; part of the gene cluster that mediates the biosynthesis of the tetrahydropyranyl antifungal agent restricticin that acts as an inhibitor of CYP51 and blocks the ergosterol biosynthesis. The highly reducing polyketide synthase rstn3, the short chain dehydrogenase rstn4, the cyclase rstn5, the FAD-dependent monooxygenase rstn6 and the enoylreductase rstn7 are required to generate the first stable intermediate desmethylrestrictinol. Rstn3 with rstn7 biosynthesize the first polyketide chain intermediate that is reduced by rstn4, followed by epoxidation by rstn6 before 6-endo cyclization via epoxide opening by rstn5 leads to desmethylrestrictinol. The methyltransferase rstn1 then catalyzes the C4 O-methylation of desmethylrestrictinol to produce restrictinol, and the nonribosomal peptide synthetase rstn8 catalyzes the C3 esterification of restrictinol with glycine that leads to restricticin. This is Highly reducing polyketide synthase rstn3 from Aspergillus nomiae NRRL (strain ATCC 15546 / NRRL 13137 / CBS 260.88 / M93).